We begin with the raw amino-acid sequence, 562 residues long: MLACLPGPGDLSLQLLSHTQMNTGLQKWDTTQKMRTAHYPTPAELDAYAKKVANNPLTIKIFPNSVKVPQRKHVRRTVNGLDTSAQRYSPYPTQAATKAGLLAIVKVPAKSILKDFDGTRARFLPEAIMNPPVAPYATVAPSTLAHPQAQALARQQALQHAQTLAHAPPQTLQHPQGIPPPQALSHPQSLQQPQGLGHPQQMAQTQGLVHPQALTHQGLQHPPNPLLHGGRKMPDSDAPPNVTVSTSTIPLSMAATLQHSQPPDLSSIVHQINQFCQTRAGISTTSVCEGQIANPSPISRSLLINASTRVSTHSVPTPMPSCVVNPMEHTHAATAALPAAGPVNLPTGISRAPTGYPSDLKPVTWNQHQLAHLQQMCSEAGGTPAPGLTGKHTAGRELAGPGFVGKAAAYPQELCLAQSFHLKPPLEKPTPSPPVNGLPAPLAYPNGHYFQPLWNNILPTPNSDSSGSQDLTMPFHGGQPTGAPLDCGAAPGAHYRAGTGGGPVASQNSLMQTVDYLSGDFQQACFREQSLAMLSKAHRAPGTRAPDPTDSRSLHIQHPGYR.

2 stretches are compositionally biased toward low complexity: residues 147-167 (PQAQ…LAHA) and 183-201 (ALSH…HPQQ). Disordered regions lie at residues 147-242 (PQAQ…PPNV) and 537-562 (AHRA…PGYR).

The protein belongs to the FAM222 family.

This chain is Protein FAM222B (Fam222b), found in Mus musculus (Mouse).